A 1647-amino-acid polypeptide reads, in one-letter code: MFNGGYGSGNSFNLQNYAPIDPMTGIPGFGPSQNAQQQQQQASAPGTSSGGPSQAVSGASSGASMKTEPVARQVSTAQMKRDLEQAAVYVPTPIPEGSTQPQQRQQQQSQPQARQMSTQQAANLRKNAAAAGTPPKQAMQGASREQGNAHQPTAGQIPQSSNQPAQQTHNVPRMPQPLQQVPHPSPVRGSHPAAQQVQNAPQRIPQHVPMPQGVAPHQVIQQVRAPNIGASQMVQQAPSRGHTGAAPASRMAQQPVPLHQGVAPHQAAPQTIQQTPARGRPANAQLAQNAQQRNPQQVPMPQGVAPHHIPPQALGPHGAAPQMTQQAPARGPSGAAQHAQNAHRMTHQQVPLQAPVQGPHRGAPQMAQQPGPHGAAQHPSSGTVAPMHITSLPGNHPLNRTHLLFNRQVVPALDIRNLIAQHRLMVDDFVRAQICYRLPENHQDYWPPGGHPIPMQQQQMRQGAGLPNMAMPPPPLMRHPGPHQNPIHAMQSMQVQPPLSPDQMNMQMFQQRALMMQQQAMQMQMQNPPPVHQQPPPQQPPQQQRQKQQRSQPAPARVPPQVPSQVPVTGGVAADEPPPPCSYSPVAQSSESKIEPVDVKPRVAPVPPQVPVTPTKPVITNNKKKRIDVVTLDEDAPRRVQVKQEIPEVSSTSDATKSDAAPTARGAVRIKQEVESDVAPNTILISAKKFERMKAEAEDKEDMKKKIAALQEALFNIQEERRVEKEIAAFATTNQAVPQNQPASSVQIAQVSTSESDAPGTSEAAATETMTSPKTKNNVIVETEGEQEEDEDEIPIKKSKKRRAKIVSNDEEEEPVRHPKRRSDEKREKRHVSYAESDDDMPVVKKKRRNQSPEDPEYSAASPSEDEDDDIGSFVVSDNEDDDADSFVVGDDEPIEYEEEDEDDMIERRSSRKRRSDSRSKKSATPTDRRRSRDTPTGSRSMRSTSPNDRRKSRETPPGNRSMRRTSPSDGRKSRDTPTASSSMSSSTLSYCKKSKETPMSYEEIEQQKKAKRQRNCKTREENRERKRLAQLEELESSETTGVRRTLRSTQDNSDPLDASLATTIEEFRKTKKKDAKSSENRAKEKQKPMNKRPTSSASVDSNDDGVHIPAKRMAHASSVPGPSRSKPPMIGAVKNRPNHTEMLDKRNKESEEKRRKDRDELERLRNKKHTTEEEKIKMARLQNALKVVGKAAGLKATVKKELTGSPAKKQKPAPAVPKILDFSVGRTFTAIRQTAIKLVFDTFLERDSPNAAREAQEFELSIAKQYTDGQKYRINIGHKVAALRKENTSGILEVNKNAVSHDKILAGGPKDNCTVARGRKTHVDHRQLSIEKLHPLLLQFKLTTSELETNAYPMRRDGSTKAVSIADTVYTQNKKMFLDDYDMSRNCSRCNKEFKLSPNGTMIRSTGICRYHNRGVAINGKRDTFRKRYSCCNEEFNVALGCKFSDVHVTDQLFKKELSTFVSTPVPVPNDQRSTRVYALDCEMVYTIAGPALARLTMVDMQRNRVLDVFVKPPTDVLDPNTEFSGLTMEQINSAPDTLKTCHQKLFKYVNADTILIGHSLESDLKAMRVVHKNVIDTAILFRSTRDTKVALKVLSAKLLHKNIQGDNEDAIGHDSMEDALTCVDLIFYGLRNPESIAIREANTNC.

Disordered stretches follow at residues 1 to 199 (MFNG…QVQN), 274 to 393 (QTPA…TSLP), 515 to 619 (MMQQ…KPVI), and 641 to 665 (QVKQ…PTAR). 2 stretches are compositionally biased toward low complexity: residues 30 to 64 (GPSQ…SGAS) and 99 to 131 (TQPQ…AAAA). Residues 143-170 (SREQGNAHQPTAGQIPQSSNQPAQQTHN) are compositionally biased toward polar residues. Low complexity-rich tracts occupy residues 274 to 297 (QTPA…NPQQ) and 515 to 526 (MMQQQAMQMQMQ). A compositionally biased stretch (pro residues) spans 527–540 (NPPPVHQQPPPQQP). Residues 541-555 (PQQQRQKQQRSQPAP) show a composition bias toward low complexity. Residues 592–601 (SKIEPVDVKP) are compositionally biased toward basic and acidic residues. Residues 650 to 664 (SSTSDATKSDAAPTA) show a composition bias toward low complexity. Positions 686–726 (SAKKFERMKAEAEDKEDMKKKIAALQEALFNIQEERRVEKE) form a coiled coil. Positions 736–756 (AVPQNQPASSVQIAQVSTSES) are enriched in polar residues. The interval 736–1174 (AVPQNQPASS…LRNKKHTTEE (439 aa)) is disordered. Positions 761–772 (TSEAAATETMTS) are enriched in low complexity. Over residues 783–793 (TEGEQEEDEDE) the composition is skewed to acidic residues. Basic and acidic residues predominate over residues 822–833 (RSDEKREKRHVS). Residues 878–905 (DNEDDDADSFVVGDDEPIEYEEEDEDDM) are compositionally biased toward acidic residues. Residues 977–992 (TPTASSSMSSSTLSYC) are compositionally biased toward low complexity. Over residues 1018–1031 (KTREENRERKRLAQ) the composition is skewed to basic and acidic residues. A compositionally biased stretch (polar residues) spans 1038-1054 (SETTGVRRTLRSTQDNS). Composition is skewed to basic and acidic residues over residues 1076–1088 (AKSS…EKQK) and 1139–1174 (NHTE…TTEE). The stretch at 1142–1187 (EMLDKRNKESEEKRRKDRDELERLRNKKHTTEEEKIKMARLQNALK) forms a coiled coil. The Exonuclease domain maps to 1477 to 1637 (RVYALDCEMV…IFYGLRNPES (161 aa)).

It belongs to the REXO1/REXO3 family. As to expression, expressed in the excretory canal, vulval cells, the intestine and in head and tail neurons including ASH, RIC and AIZ neurons.

The protein localises to the nucleus. Functionally, putative RNA exonuclease which protects neurons from the toxic effects of expanded poly-Q disease proteins. It is unknown whether this is via participation in the pathogenic mechanism underlying poly-Q-induced neurodegeneration or if it is by acting as a genetic modifier of the age of onset or progression of neurodegeneration. Regulates gene expression in neurons. This is Putative RNA exonuclease pqe-1 from Caenorhabditis elegans.